The sequence spans 466 residues: Ribulose bisphosphate carboxylase large chain (466 aa).

Lysine 4 is modified (N6,N6,N6-trimethyllysine). 2 residues coordinate substrate: asparagine 113 and threonine 163. Residue lysine 165 is the Proton acceptor of the active site. Lysine 167 is a substrate binding site. 3 residues coordinate Mg(2+): lysine 191, aspartate 193, and glutamate 194. Position 191 is an N6-carboxylysine (lysine 191). Catalysis depends on histidine 284, which acts as the Proton acceptor. The substrate site is built by arginine 285, histidine 317, and serine 369.

Belongs to the RuBisCO large chain family. Type I subfamily. As to quaternary structure, heterohexadecamer of 8 large chains and 8 small chains; disulfide-linked. The disulfide link is formed within the large subunit homodimers. Mg(2+) serves as cofactor. Post-translationally, the disulfide bond which can form in the large chain dimeric partners within the hexadecamer appears to be associated with oxidative stress and protein turnover.

It is found in the plastid. Its subcellular location is the chloroplast. It carries out the reaction 2 (2R)-3-phosphoglycerate + 2 H(+) = D-ribulose 1,5-bisphosphate + CO2 + H2O. It catalyses the reaction D-ribulose 1,5-bisphosphate + O2 = 2-phosphoglycolate + (2R)-3-phosphoglycerate + 2 H(+). RuBisCO catalyzes two reactions: the carboxylation of D-ribulose 1,5-bisphosphate, the primary event in carbon dioxide fixation, as well as the oxidative fragmentation of the pentose substrate in the photorespiration process. Both reactions occur simultaneously and in competition at the same active site. The chain is Ribulose bisphosphate carboxylase large chain from Ruttya fruticosa (African azalea).